A 470-amino-acid chain; its full sequence is Suppressor of SWI4 1 homolog (470 aa).

The 264-residue stretch at 29-292 folds into the Brix domain; sequence PHSFVFTRGR…LIKIQEGVGN (264 aa). Serine 238 and serine 240 each carry phosphoserine. 2 disordered regions span residues 240 to 264 and 323 to 470; these read SEVE…GNMQ and AQRQ…RRRN. The span at 342–355 shows a compositional bias: basic residues; that stretch reads AHKKKSLAGIKRAR. Serine 362 carries the post-translational modification Phosphoserine. Lysine 441 carries the post-translational modification N6-acetyllysine. The span at 447–457 shows a compositional bias: basic residues; that stretch reads QRGKAKPRPRA.

The protein resides in the nucleus. The protein localises to the nucleolus. May have a role in cell growth. The protein is Suppressor of SWI4 1 homolog (Ppan) of Mus musculus (Mouse).